The following is a 257-amino-acid chain: Tryptophan synthase alpha chain (257 aa).

Active-site proton acceptor residues include glutamate 47 and aspartate 58.

It belongs to the TrpA family. Tetramer of two alpha and two beta chains.

It catalyses the reaction (1S,2R)-1-C-(indol-3-yl)glycerol 3-phosphate + L-serine = D-glyceraldehyde 3-phosphate + L-tryptophan + H2O. It participates in amino-acid biosynthesis; L-tryptophan biosynthesis; L-tryptophan from chorismate: step 5/5. Functionally, the alpha subunit is responsible for the aldol cleavage of indoleglycerol phosphate to indole and glyceraldehyde 3-phosphate. The sequence is that of Tryptophan synthase alpha chain from Listeria innocua serovar 6a (strain ATCC BAA-680 / CLIP 11262).